We begin with the raw amino-acid sequence, 118 residues long: Membrane-anchored ubiquitin-fold protein 3 (118 aa).

In terms of domain architecture, Ubiquitin-like spans 7–73; that stretch reads IDIKFRLYDG…LENNKTVGQC (67 aa). Cysteine 113 carries S-palmitoyl cysteine lipidation. Cysteine 115 carries the post-translational modification Cysteine methyl ester. Cysteine 115 carries the S-geranylgeranyl cysteine lipid modification. Positions 116 to 118 are cleaved as a propeptide — removed in mature form; it reads TIL.

As to expression, ubiquitous, but three fold higher expression in senescing leaves.

It is found in the cell membrane. May serve as docking site to facilitate the association of other proteins to the plasma membrane. The sequence is that of Membrane-anchored ubiquitin-fold protein 3 (MUB3) from Arabidopsis thaliana (Mouse-ear cress).